The sequence spans 505 residues: Histidine--tRNA ligase (505 aa).

This sequence belongs to the class-II aminoacyl-tRNA synthetase family. As to quaternary structure, homodimer.

It is found in the cytoplasm. The enzyme catalyses tRNA(His) + L-histidine + ATP = L-histidyl-tRNA(His) + AMP + diphosphate + H(+). In Jannaschia sp. (strain CCS1), this protein is Histidine--tRNA ligase.